The sequence spans 120 residues: Large ribosomal subunit protein bL20c (120 aa).

It belongs to the bacterial ribosomal protein bL20 family.

Its subcellular location is the plastid. In terms of biological role, binds directly to 23S ribosomal RNA and is necessary for the in vitro assembly process of the 50S ribosomal subunit. It is not involved in the protein synthesizing functions of that subunit. This chain is Large ribosomal subunit protein bL20c, found in Cuscuta obtusiflora (Peruvian dodder).